Here is a 446-residue protein sequence, read N- to C-terminus: Adenylosuccinate synthetase (446 aa).

GTP-binding positions include 21–27 and 49–51; these read GDEGKGK and GHT. Catalysis depends on D22, which acts as the Proton acceptor. The Mg(2+) site is built by D22 and G49. IMP is bound by residues 22-25, 47-50, T141, R155, Q236, T251, and R319; these read DEGK and NAGH. H50 acts as the Proton donor in catalysis. Position 315–321 (315–321) interacts with substrate; the sequence is VTTGRSR. Residues R321, 347–349, and 429–431 contribute to the GTP site; these read KLD and STS.

It belongs to the adenylosuccinate synthetase family. In terms of assembly, homodimer. The cofactor is Mg(2+).

Its subcellular location is the cytoplasm. The enzyme catalyses IMP + L-aspartate + GTP = N(6)-(1,2-dicarboxyethyl)-AMP + GDP + phosphate + 2 H(+). It participates in purine metabolism; AMP biosynthesis via de novo pathway; AMP from IMP: step 1/2. Functionally, plays an important role in the de novo pathway of purine nucleotide biosynthesis. Catalyzes the first committed step in the biosynthesis of AMP from IMP. The polypeptide is Adenylosuccinate synthetase (Polaromonas sp. (strain JS666 / ATCC BAA-500)).